We begin with the raw amino-acid sequence, 426 residues long: MPPKKQAQAGGSKKAEQKKKEKIIEDKTFGLKNKKGAKQQKFIKAVTHQVKFGQQNPRQVAQSEAEKKLKKDDKKKELQELNELFKPVVAAQKISKGADPKSVVCAFFKQGQCTKGDKCKFSHDLTLERKCEKRSVYIDARDEELEKDTMDNWDEKKLEEVVNKKHGEAEKKKPKTQIVCKHFLEAIENNKYGWFWVCPGGGDICMYRHALPPGFVLKKDKKKEEKEDEISLEDLIERERSALGPNVTKITLESFLAWKKRKRQEKIDKLEQDMERRKADFKAGKALVISGREVFEFRPELVNDDDEEADDTRYTQGTGGDEVDDSVSVNDIDLSLYIPRDVDETGITVASLERFSTYTSDKDENKLSEASGGRAENGERSDLEEDNEREGTENGAIDAVPVDENLFTGEDLDELEEELNTLDLEE.

Low complexity predominate over residues 1 to 12 (MPPKKQAQAGGS). Disordered regions lie at residues 1 to 30 (MPPK…KTFG) and 53 to 74 (GQQN…KDDK). Basic and acidic residues predominate over residues 13 to 29 (KKAEQKKKEKIIEDKTF). Over residues 53–62 (GQQNPRQVAQ) the composition is skewed to polar residues. The stretch at 61-86 (AQSEAEKKLKKDDKKKELQELNELFK) forms a coiled coil. The span at 64 to 74 (EAEKKLKKDDK) shows a compositional bias: basic and acidic residues. C3H1-type zinc fingers lie at residues 99 to 126 (DPKS…HDLT) and 174 to 212 (PKTQ…HALP). Positions 218 to 285 (KKDKKKEEKE…RRKADFKAGK (68 aa)) form a coiled coil. Ser231 carries the phosphoserine modification. Residues 236–260 (IERERSALGPNVTKITLESFLAWKK) are required for interaction with DRG1. Residues 299-326 (PELVNDDDEEADDTRYTQGTGGDEVDDS) form a disordered region. A phosphoserine mark is found at Ser351, Ser360, and Ser381. The tract at residues 358–411 (YTSDKDENKLSEASGGRAENGERSDLEEDNEREGTENGAIDAVPVDENLFTGED) is disordered.

It belongs to the ZC3H15/TMA46 family. Interacts with DRG1; this interaction prevents DRG1 poly-ubiquitination and degradation by proteasome. DRG1-ZC3H15/DFRP1 complex co-sediments with polysomes. Associates with microtubules.

Its subcellular location is the cytoplasm. The protein localises to the nucleus. Protects DRG1 from proteolytic degradation. Stimulates DRG1 GTPase activity likely by increasing the affinity for the potassium ions. The chain is Zinc finger CCCH domain-containing protein 15 (ZC3H15) from Homo sapiens (Human).